A 619-amino-acid polypeptide reads, in one-letter code: Magnesium-chelatase 67 kDa subunit (619 aa).

33–40 is an ATP binding site; the sequence is STVGSGKS. Residues 273-321 are disordered; sequence TRMPEREPSEEEMQQEEPPPPEEQPEQEGEDENAPPDETDSDADEEQEE. A compositionally biased stretch (acidic residues) spans 280 to 321; that stretch reads PSEEEMQQEEPPPPEEQPEQEGEDENAPPDETDSDADEEQEE. Residues 431 to 619 form the VWFA domain; the sequence is LFIFMVDASG…AEQIVEAALS (189 aa).

It belongs to the Mg-chelatase subunits D/I family.

The enzyme catalyses protoporphyrin IX + Mg(2+) + ATP + H2O = Mg-protoporphyrin IX + ADP + phosphate + 3 H(+). It functions in the pathway porphyrin-containing compound metabolism; bacteriochlorophyll biosynthesis. Involved in bacteriochlorophyll biosynthesis; introduces a magnesium ion into protoporphyrin IX to yield Mg-protoporphyrin IX. In Chlorobaculum parvum (strain DSM 263 / NCIMB 8327) (Chlorobium vibrioforme subsp. thiosulfatophilum), this protein is Magnesium-chelatase 67 kDa subunit (bchD).